The sequence spans 301 residues: Acetaldehyde dehydrogenase (301 aa).

Cysteine 130 acts as the Acyl-thioester intermediate in catalysis. NAD(+) is bound by residues 161–169 (SVGPGTRRN) and asparagine 272.

This sequence belongs to the acetaldehyde dehydrogenase family.

The catalysed reaction is acetaldehyde + NAD(+) + CoA = acetyl-CoA + NADH + H(+). The protein is Acetaldehyde dehydrogenase (mhpF) of Cupriavidus taiwanensis (strain DSM 17343 / BCRC 17206 / CCUG 44338 / CIP 107171 / LMG 19424 / R1) (Ralstonia taiwanensis (strain LMG 19424)).